Reading from the N-terminus, the 1141-residue chain is Eukaryotic translation initiation factor 3 subunit A (1141 aa).

One can recognise a PCI domain in the interval 319–501; that stretch reads LQRMAAHVLL…NSIYFGTDLT (183 aa). Composition is skewed to basic and acidic residues over residues 588 to 623 and 829 to 899; these read QNNA…EERE and AAEE…RGGD. Disordered stretches follow at residues 588–631 and 829–1141; these read QNNA…QNEI and AAEE…VKRR. A Phosphoserine modification is found at Ser-908. Basic and acidic residues-rich tracts occupy residues 920-976, 990-1051, 1059-1087, and 1110-1131; these read ERND…EPDT, SRDD…EPQR, DAPR…RGDQ, and TREE…KAGD.

Belongs to the eIF-3 subunit A family. In terms of assembly, component of the eukaryotic translation initiation factor 3 (eIF-3) complex. The eIF-3 complex interacts with pix.

It localises to the cytoplasm. RNA-binding component of the eukaryotic translation initiation factor 3 (eIF-3) complex, which is involved in protein synthesis of a specialized repertoire of mRNAs and, together with other initiation factors, stimulates binding of mRNA and methionyl-tRNAi to the 40S ribosome. The eIF-3 complex specifically targets and initiates translation of a subset of mRNAs involved in cell proliferation. The protein is Eukaryotic translation initiation factor 3 subunit A of Drosophila simulans (Fruit fly).